The primary structure comprises 465 residues: Fujikurins efflux protein FFUJ_12242 (465 aa).

The disordered stretch occupies residues 1 to 66 (MATNVGGAVD…AAKAHDEGPP (66 aa)). Positions 11-28 (NSRRSISDNRHDPEKPAE) are enriched in basic and acidic residues. A run of 7 helical transmembrane segments spans residues 70 to 90 (TAAWMVVLGAWCCSFCSPGWI), 115 to 135 (WIPSLEIFFLFGLGPIVGIIF), 142 to 162 (PLIIGGTIFHVFGLMMASLAK), 175 to 195 (SAIGVACLYSPALACISTWFL), 200 to 220 (AAMGIMATGSSVGGVIFPIMI), 231 to 251 (WALRTAAFLILGLQVIACLTV), and 274 to 294 (PAFALLLAGIFILTYGMYIPI). N310 is a glycosylation site (N-linked (GlcNAc...) asparagine). 5 helical membrane passes run 314–334 (YLVAIMNAASLFGRLGAGYGA), 342–362 (MFIIACGVTGISNLAVWIPAT), 368–388 (IGYAIMFGFASGAFVSLVGAL), 404–424 (IVFLVISIPALTMAPIGGAIL), and 430–450 (GWVSLKVFAGVMCLVGSAIIL).

It belongs to the major facilitator superfamily. Monocarboxylate porter (TC 2.A.1.13) family.

It is found in the cell membrane. In terms of biological role, efflux pump that may be involved in the secretion of fujikurins. The sequence is that of Fujikurins efflux protein FFUJ_12242 from Gibberella fujikuroi (strain CBS 195.34 / IMI 58289 / NRRL A-6831) (Bakanae and foot rot disease fungus).